Reading from the N-terminus, the 206-residue chain is Emopamil-binding protein-like (206 aa).

4 helical membrane-spanning segments follow: residues 10–30 (EAGS…ALGL), 42–62 (WVLA…GAFV), 101–121 (LEIL…YAIV), and 165–185 (LWVY…LLLW). The region spanning 39–184 (VERWVLAWLC…LWVLIPGLLL (146 aa)) is the EXPERA domain.

This sequence belongs to the EBP family. As to quaternary structure, homodimer.

It localises to the endoplasmic reticulum membrane. Functionally, does not possess sterol isomerase activity and does not bind sigma ligands. This chain is Emopamil-binding protein-like (Ebpl), found in Mus musculus (Mouse).